A 165-amino-acid polypeptide reads, in one-letter code: Small ribosomal subunit protein uS5 (165 aa).

The region spanning 13–76 (LEEKVLVVNR…EAARKNLITI (64 aa)) is the S5 DRBM domain.

The protein belongs to the universal ribosomal protein uS5 family. In terms of assembly, part of the 30S ribosomal subunit. Contacts proteins S4 and S8.

Its function is as follows. With S4 and S12 plays an important role in translational accuracy. Functionally, located at the back of the 30S subunit body where it stabilizes the conformation of the head with respect to the body. The protein is Small ribosomal subunit protein uS5 of Chlamydia abortus (strain DSM 27085 / S26/3) (Chlamydophila abortus).